The chain runs to 590 residues: Aspartate--tRNA(Asp/Asn) ligase (590 aa).

L-aspartate is bound at residue Glu173. The segment at 197–200 (QIFK) is aspartate. Residue Arg219 participates in L-aspartate binding. ATP contacts are provided by residues 219-221 (RDE) and Gln228. His450 contributes to the L-aspartate binding site. An ATP-binding site is contributed by Glu484. Arg491 lines the L-aspartate pocket. 536-539 (GLDR) provides a ligand contact to ATP.

This sequence belongs to the class-II aminoacyl-tRNA synthetase family. Type 1 subfamily. In terms of assembly, homodimer.

The protein localises to the cytoplasm. It catalyses the reaction tRNA(Asx) + L-aspartate + ATP = L-aspartyl-tRNA(Asx) + AMP + diphosphate. Its function is as follows. Aspartyl-tRNA synthetase with relaxed tRNA specificity since it is able to aspartylate not only its cognate tRNA(Asp) but also tRNA(Asn). Reaction proceeds in two steps: L-aspartate is first activated by ATP to form Asp-AMP and then transferred to the acceptor end of tRNA(Asp/Asn). This Coxiella burnetii (strain RSA 493 / Nine Mile phase I) protein is Aspartate--tRNA(Asp/Asn) ligase.